Here is a 170-residue protein sequence, read N- to C-terminus: Myosin regulatory light chain 2 (170 aa).

Residues 1–13 (MSKAAKKKSSKKR) are compositionally biased toward basic residues. Positions 1-22 (MSKAAKKKSSKKRSGSEAAQFD) are disordered. EF-hand domains lie at 24-59 (KTIQ…MGQI) and 93-128 (DPEA…KRGE). The Ca(2+) site is built by Asp37, Asn39, Asp41, and Asp48.

In terms of assembly, myosin is a hexamer of 2 heavy chains and 4 light chains (two regulatory light chains and two essential light chains).

This Caenorhabditis elegans protein is Myosin regulatory light chain 2 (mlc-2).